A 1020-amino-acid polypeptide reads, in one-letter code: Protein CLASP-2 (1020 aa).

Low complexity predominate over residues 259 to 271; it reads ASDAASSSTSINS. 3 disordered regions span residues 259–280, 329–387, and 419–461; these read ASDAASSSTSINSERGTAPFRS, PMTT…RPSA, and LQKA…ALDT. Residues 329–343 are compositionally biased toward polar residues; the sequence is PMTTRTLSKIDTSPG. Low complexity predominate over residues 372–381; it reads SQPGSRNGSP. Positions 450–460 are enriched in polar residues; that stretch reads QKATPQKSALD. An HEAT repeat occupies 954–992; that stretch reads LAPCVIKSYDSPSSAVRKTAVYCLVAMVNKLGMKTMEPH.

This sequence belongs to the CLASP family. Interacts with hcp-1 and hcp-2.

Its subcellular location is the cytoplasm. It localises to the cytoskeleton. It is found in the microtubule organizing center. The protein resides in the centrosome. The protein localises to the chromosome. Its subcellular location is the centromere. It localises to the kinetochore. It is found in the spindle. Functionally, probable microtubule plus-end tracking protein that promotes the stabilization of dynamic microtubules. Required for the formation of mitotic and meiotic spindles. Specifically promotes the polymerization of kinetochore-bound microtubules. Also required for cytoplasmic streaming. Essential for embryonic development. This Caenorhabditis elegans protein is Protein CLASP-2 (cls-2).